Reading from the N-terminus, the 199-residue chain is Prolactin-2 (199 aa).

3 disulfides stabilise this stretch: C4–C11, C58–C174, and C191–C199.

Belongs to the somatotropin/prolactin family.

The protein resides in the secreted. This is Prolactin-2 from Crocodylus novaeguineae (Crocodile).